The chain runs to 883 residues: Phosphoenolpyruvate carboxylase (883 aa).

Catalysis depends on residues His-138 and Lys-546.

This sequence belongs to the PEPCase type 1 family. Mg(2+) serves as cofactor.

It catalyses the reaction oxaloacetate + phosphate = phosphoenolpyruvate + hydrogencarbonate. Forms oxaloacetate, a four-carbon dicarboxylic acid source for the tricarboxylic acid cycle. The polypeptide is Phosphoenolpyruvate carboxylase (Escherichia coli O7:K1 (strain IAI39 / ExPEC)).